The sequence spans 261 residues: Ribonuclease HII (261 aa).

One can recognise an RNase H type-2 domain in the interval 71–259 (KYIAGVDEVG…VKEAKLHFDS (189 aa)). The a divalent metal cation site is built by aspartate 77, glutamate 78, and aspartate 169.

It belongs to the RNase HII family. It depends on Mn(2+) as a cofactor. Mg(2+) is required as a cofactor.

The protein resides in the cytoplasm. The catalysed reaction is Endonucleolytic cleavage to 5'-phosphomonoester.. Functionally, endonuclease that specifically degrades the RNA of RNA-DNA hybrids. In Listeria monocytogenes serotype 4a (strain HCC23), this protein is Ribonuclease HII.